The chain runs to 454 residues: Phosphoglucosamine mutase (454 aa).

The active-site Phosphoserine intermediate is the Ser101. 4 residues coordinate Mg(2+): Ser101, Asp243, Asp245, and Asp247. Ser101 carries the phosphoserine modification.

Belongs to the phosphohexose mutase family. The cofactor is Mg(2+). In terms of processing, activated by phosphorylation.

It catalyses the reaction alpha-D-glucosamine 1-phosphate = D-glucosamine 6-phosphate. Catalyzes the conversion of glucosamine-6-phosphate to glucosamine-1-phosphate. The chain is Phosphoglucosamine mutase from Geobacter sp. (strain M21).